Here is a 106-residue protein sequence, read N- to C-terminus: Small ribosomal subunit protein uS10 (106 aa).

It belongs to the universal ribosomal protein uS10 family. In terms of assembly, part of the 30S ribosomal subunit.

Its function is as follows. Involved in the binding of tRNA to the ribosomes. The sequence is that of Small ribosomal subunit protein uS10 from Prochlorococcus marinus (strain MIT 9312).